The sequence spans 243 residues: DNA repair protein RecO (243 aa).

This sequence belongs to the RecO family.

In terms of biological role, involved in DNA repair and RecF pathway recombination. The protein is DNA repair protein RecO of Serratia proteamaculans (strain 568).